A 304-amino-acid chain; its full sequence is Ribosomal protein L11 methyltransferase (304 aa).

4 residues coordinate S-adenosyl-L-methionine: threonine 155, glycine 176, aspartate 198, and asparagine 239.

The protein belongs to the methyltransferase superfamily. PrmA family.

It is found in the cytoplasm. It catalyses the reaction L-lysyl-[protein] + 3 S-adenosyl-L-methionine = N(6),N(6),N(6)-trimethyl-L-lysyl-[protein] + 3 S-adenosyl-L-homocysteine + 3 H(+). In terms of biological role, methylates ribosomal protein L11. The polypeptide is Ribosomal protein L11 methyltransferase (Caldicellulosiruptor bescii (strain ATCC BAA-1888 / DSM 6725 / KCTC 15123 / Z-1320) (Anaerocellum thermophilum)).